Here is a 796-residue protein sequence, read N- to C-terminus: Transcription factor kayak (796 aa).

Disordered stretches follow at residues A109–S132, V315–V341, F374–G429, and V442–L490. Positions T402–G429 are enriched in low complexity. Residues R447–T457 show a composition bias toward polar residues. The region spanning E478–H541 is the bZIP domain. The interval K480–R499 is basic motif. The segment at L506–L534 is leucine-zipper. The tract at residues S569 to S601 is disordered. S621 carries the phosphoserine modification. Disordered stretches follow at residues P642–A661 and S774–L796.

This sequence belongs to the bZIP family. Fos subfamily. Homodimer. Heterodimer with Jra. The kay-Jra heterodimer binds more stably to the AP-1 site than either of the two proteins alone.

The protein localises to the nucleus. In terms of biological role, developmentally regulated transcription factor AP-1 binds and recognizes the enhancer DNA sequence: 5'-TGA[CG]TCA-3'. May play a role in the function or determination of a particular subset of cells in the developing embryo. It is able to carry out its function either independently of or in conjunction with Jra. This chain is Transcription factor kayak, found in Drosophila grimshawi (Hawaiian fruit fly).